A 189-amino-acid polypeptide reads, in one-letter code: Peptidyl-tRNA hydrolase (189 aa).

Y15 is a tRNA binding site. The active-site Proton acceptor is H20. F66, N68, and N114 together coordinate tRNA.

This sequence belongs to the PTH family. As to quaternary structure, monomer.

The protein resides in the cytoplasm. The enzyme catalyses an N-acyl-L-alpha-aminoacyl-tRNA + H2O = an N-acyl-L-amino acid + a tRNA + H(+). In terms of biological role, hydrolyzes ribosome-free peptidyl-tRNAs (with 1 or more amino acids incorporated), which drop off the ribosome during protein synthesis, or as a result of ribosome stalling. Catalyzes the release of premature peptidyl moieties from peptidyl-tRNA molecules trapped in stalled 50S ribosomal subunits, and thus maintains levels of free tRNAs and 50S ribosomes. The chain is Peptidyl-tRNA hydrolase from Streptococcus suis (strain 98HAH33).